Reading from the N-terminus, the 63-residue chain is Sec-independent protein translocase protein TatA (63 aa).

Residues 1–21 (MGSFSMWHWLIVLVIVLLLFG) form a helical membrane-spanning segment. Positions 42–63 (GMTDEDAPDTAKTVDHKADETK) are disordered. Residues 53 to 63 (KTVDHKADETK) show a composition bias toward basic and acidic residues.

Belongs to the TatA/E family. The Tat system comprises two distinct complexes: a TatABC complex, containing multiple copies of TatA, TatB and TatC subunits, and a separate TatA complex, containing only TatA subunits. Substrates initially bind to the TatABC complex, which probably triggers association of the separate TatA complex to form the active translocon.

The protein resides in the cell inner membrane. Functionally, part of the twin-arginine translocation (Tat) system that transports large folded proteins containing a characteristic twin-arginine motif in their signal peptide across membranes. TatA could form the protein-conducting channel of the Tat system. The protein is Sec-independent protein translocase protein TatA of Rhizobium leguminosarum bv. trifolii (strain WSM2304).